The primary structure comprises 242 residues: UDP-2,3-diacylglucosamine hydrolase (242 aa).

Residues D8, H10, D41, N79, and H114 each coordinate Mn(2+). Residue 79–80 (NR) coordinates substrate. Substrate is bound by residues D122, K164, K167, and H195. Residues H195 and H197 each contribute to the Mn(2+) site.

Belongs to the LpxH family. Requires Mn(2+) as cofactor.

The protein resides in the cell inner membrane. It carries out the reaction UDP-2-N,3-O-bis[(3R)-3-hydroxytetradecanoyl]-alpha-D-glucosamine + H2O = 2-N,3-O-bis[(3R)-3-hydroxytetradecanoyl]-alpha-D-glucosaminyl 1-phosphate + UMP + 2 H(+). It functions in the pathway glycolipid biosynthesis; lipid IV(A) biosynthesis; lipid IV(A) from (3R)-3-hydroxytetradecanoyl-[acyl-carrier-protein] and UDP-N-acetyl-alpha-D-glucosamine: step 4/6. Hydrolyzes the pyrophosphate bond of UDP-2,3-diacylglucosamine to yield 2,3-diacylglucosamine 1-phosphate (lipid X) and UMP by catalyzing the attack of water at the alpha-P atom. Involved in the biosynthesis of lipid A, a phosphorylated glycolipid that anchors the lipopolysaccharide to the outer membrane of the cell. This chain is UDP-2,3-diacylglucosamine hydrolase, found in Vibrio parahaemolyticus serotype O3:K6 (strain RIMD 2210633).